The chain runs to 211 residues: Synaptosomal-associated protein 23 (211 aa).

Methionine 1 is subject to N-acetylmethionine. Serine 5, serine 6, serine 20, serine 23, and serine 34 each carry phosphoserine. The region spanning histidine 14–leucine 76 is the t-SNARE coiled-coil homology 1 domain. Positions serine 23–leucine 76 form a coiled coil. Residues cysteine 79, cysteine 80, cysteine 83, cysteine 85, and cysteine 87 are each lipidated (S-palmitoyl cysteine). Serine 110 bears the Phosphoserine mark. A lipid anchor (S-palmitoyl cysteine) is attached at cysteine 112. Residues aspartate 146 to leucine 208 enclose the t-SNARE coiled-coil homology 2 domain. Serine 161 is subject to Phosphoserine.

This sequence belongs to the SNAP-25 family. In terms of assembly, homotetramer (via coiled-coil domain), also forms heterotetramers with STX4 and VAMP3. Found in a complex with VAMP8 and STX1A. Found in a complex with VAMP8 and STX4 in pancreas. Interacts simultaneously with SNAPIN and SYN4. Interacts with STX1A. Interacts with STX12. Interacts tightly to multiple syntaxins and synaptobrevins/VAMPs. Interacts with ZDHHC13 (via ANK repeats). Interacts with ZDHHC17 (via ANK repeats). As to expression, ubiquitous. Highest levels where found in placenta.

Its subcellular location is the cell membrane. It is found in the synapse. It localises to the synaptosome. In terms of biological role, essential component of the high affinity receptor for the general membrane fusion machinery and an important regulator of transport vesicle docking and fusion. This Homo sapiens (Human) protein is Synaptosomal-associated protein 23 (SNAP23).